A 709-amino-acid chain; its full sequence is Nucleobase-ascorbate transporter 11 (709 aa).

2 disordered regions span residues 1-28 (MDSG…YGER) and 58-167 (TGFV…SEDG). Residues 15 to 25 (KGNGSGGGNGY) are compositionally biased toward gly residues. A compositionally biased stretch (polar residues) spans 65–74 (SGETSTSTRT). Basic and acidic residues-rich tracts occupy residues 75 to 89 (KFGE…KGRD), 108 to 132 (NRPE…RLNR), and 142 to 151 (EGGKINKDLE). 12 helical membrane passes run 196 to 216 (YLSL…AMDG), 222 to 242 (ASVI…HCYF), 246 to 266 (LPLV…VINS), 288 to 308 (IIVG…SLLL), 310 to 330 (FINP…FFSY), 336 to 356 (GTCV…TLYL), 369 to 389 (IYAV…LTVG), 454 to 474 (IIMI…YHSA), 532 to 552 (LVIG…GAIL), 555 to 575 (IPQA…VSLG), 590 to 610 (ITIV…FQQY), and 642 to 662 (FAMN…AFIL).

Belongs to the nucleobase:cation symporter-2 (NCS2) (TC 2.A.40) family. In terms of tissue distribution, expressed in leaf primordia and vasculature of pedicels, rosette leaves, sepals, carpels and siliques. Expressed in the root central cylinder.

Its subcellular location is the membrane. This Arabidopsis thaliana (Mouse-ear cress) protein is Nucleobase-ascorbate transporter 11 (NAT11).